The following is a 186-amino-acid chain: UPF0149 protein Pfl01_5435 (186 aa).

The protein belongs to the UPF0149 family.

This chain is UPF0149 protein Pfl01_5435, found in Pseudomonas fluorescens (strain Pf0-1).